The primary structure comprises 311 residues: Putative HTH-type transcriptional regulatory protein PTO0557 (311 aa).

The HTH cro/C1-type domain maps to 132–186 (MRRIRELKGYSVGYLSSKLGISRRSISLYESGSSATIDIYLKLEETLGEDLTKDI). The segment at residues 143–162 (VGYLSSKLGISRRSISLYES) is a DNA-binding region (H-T-H motif).

The protein is Putative HTH-type transcriptional regulatory protein PTO0557 of Picrophilus torridus (strain ATCC 700027 / DSM 9790 / JCM 10055 / NBRC 100828 / KAW 2/3).